Here is a 329-residue protein sequence, read N- to C-terminus: NTD biosynthesis operon regulator NtdR (329 aa).

The region spanning 2–56 (PTIDEIAKLCNVSKTTVSRVLNNHPYVSKEKRDMILKAINELDYTPNYLARNFRR) is the HTH lacI-type domain. A DNA-binding region (H-T-H motif) is located at residues 4–23 (IDEIAKLCNVSKTTVSRVLN).

Functionally, positively regulates the ntdABC operon and negatively regulates its own transcription. Binds to NTD to induce ntdABC transcription. The chain is NTD biosynthesis operon regulator NtdR (ntdR) from Bacillus subtilis (strain 168).